Here is a 1303-residue protein sequence, read N- to C-terminus: Phosphoribosylformylglycinamidine synthase (1303 aa).

ATP contacts are provided by residues 308 to 319 (GASTGSGGEIRD) and Ala-679. Residues Glu-719, Asn-723, and Asp-892 each coordinate Mg(2+). Residues 1003 to 1023 (LRDNPACADQEHEAKKDNSDP) form a disordered region. Basic and acidic residues predominate over residues 1011–1021 (DQEHEAKKDNS). The Glutamine amidotransferase type-1 domain maps to 1050-1303 (MAILREQGVN…MFQNARKNIG (254 aa)). Cys-1143 acts as the Nucleophile in catalysis. Catalysis depends on residues His-1268 and Glu-1270.

The protein in the N-terminal section; belongs to the FGAMS family. As to quaternary structure, monomer.

It localises to the cytoplasm. The enzyme catalyses N(2)-formyl-N(1)-(5-phospho-beta-D-ribosyl)glycinamide + L-glutamine + ATP + H2O = 2-formamido-N(1)-(5-O-phospho-beta-D-ribosyl)acetamidine + L-glutamate + ADP + phosphate + H(+). Its pathway is purine metabolism; IMP biosynthesis via de novo pathway; 5-amino-1-(5-phospho-D-ribosyl)imidazole from N(2)-formyl-N(1)-(5-phospho-D-ribosyl)glycinamide: step 1/2. Functionally, phosphoribosylformylglycinamidine synthase involved in the purines biosynthetic pathway. Catalyzes the ATP-dependent conversion of formylglycinamide ribonucleotide (FGAR) and glutamine to yield formylglycinamidine ribonucleotide (FGAM) and glutamate. The protein is Phosphoribosylformylglycinamidine synthase of Aliivibrio fischeri (strain ATCC 700601 / ES114) (Vibrio fischeri).